The following is a 109-amino-acid chain: UPF0235 protein MA_4097 (109 aa).

It belongs to the UPF0235 family.

This is UPF0235 protein MA_4097 from Methanosarcina acetivorans (strain ATCC 35395 / DSM 2834 / JCM 12185 / C2A).